Consider the following 108-residue polypeptide: LALLLVALAVAYAVPDPRGVIINLEAGEICMNSAQCKSECCHRESSLSLARCAAKASENSECSAWTLYGVYYKCPCERGLTCQVDKTLVGSIMNTNFGICFDAARSEE.

The N-terminal stretch at 1–13 (LALLLVALAVAYA) is a signal peptide. Residues 14–18 (VPDPR) constitute a propeptide, enterostatin, activation peptide. 5 disulfides stabilise this stretch: cysteine 30-cysteine 41, cysteine 36-cysteine 52, cysteine 40-cysteine 74, cysteine 62-cysteine 82, and cysteine 76-cysteine 100. Taurodeoxycholate is bound at residue tryptophan 65.

The protein belongs to the colipase family. Forms a 1:1 stoichiometric complex with pancreatic lipase. As to expression, expressed by the pancreas.

Its subcellular location is the secreted. Functionally, colipase is a cofactor of pancreatic lipase. It allows the lipase to anchor itself to the lipid-water interface. Without colipase the enzyme is washed off by bile salts, which have an inhibitory effect on the lipase. Its function is as follows. Enterostatin has a biological activity as a satiety signal. This Equus caballus (Horse) protein is Colipase B (CLPS2).